A 492-amino-acid polypeptide reads, in one-letter code: ERAD-associated E3 ubiquitin-protein ligase HRD1A (492 aa).

Residues 1 to 3 (MIR) lie on the Cytoplasmic side of the membrane. Residues 4–24 (LRTYAGLSFMATLAVIYHAFS) form a helical membrane-spanning segment. The Lumenal segment spans residues 25-40 (SRGQFYPATVYLSTSK). The chain crosses the membrane as a helical span at residues 41 to 61 (ISLVLLLNMCLVLMLSLWHLV). The Cytoplasmic portion of the chain corresponds to 62 to 98 (KFVFLGSLREAEVERLNEQAWRELMEILFAITIFRQD). The helical transmembrane segment at 99–119 (FSSGFLPLVVTLLLIKALHWL) threads the bilayer. Residues 120 to 135 (AQKRVEYIETTPSVSK) lie on the Lumenal side of the membrane. Residues 136–156 (LSHFRIVSFMGFLLLVDSLFM) traverse the membrane as a helical segment. At 157 to 170 (YSSIRHLIQSRQAS) the chain is on the cytoplasmic side. A helical membrane pass occupies residues 171 to 191 (VSLFFSFEYMILATTTVAIFV). Over 192-221 (KYVFYVTDMLMDGQWEKKPVYTFYLELIRD) the chain is Lumenal. A helical transmembrane segment spans residues 222 to 242 (LLHLSMYICFFFVIFMNYGVP). The Cytoplasmic segment spans residues 243-492 (LHLLRELYET…KGKSVADAAE (250 aa)). Residues 292 to 330 (CIICREEMTNAKKLICGHLFHVHCLRSWLERQQTCPTCR) form an RING-type; atypical zinc finger. Disordered stretches follow at residues 339-379 (ATSA…NSLS) and 470-492 (ETRK…DAAE). Residues 351–378 (QGSQQGTSSSGNQGSEISSSAGVSNNSL) show a composition bias toward low complexity. Over residues 470–486 (ETRKPESAGEPENKGKS) the composition is skewed to basic and acidic residues.

The protein belongs to the HRD1 family.

Its subcellular location is the endoplasmic reticulum membrane. It carries out the reaction S-ubiquitinyl-[E2 ubiquitin-conjugating enzyme]-L-cysteine + [acceptor protein]-L-lysine = [E2 ubiquitin-conjugating enzyme]-L-cysteine + N(6)-ubiquitinyl-[acceptor protein]-L-lysine.. It participates in protein modification; protein ubiquitination. Probable component of the HRD1 ubiquitin ligase complex that mediates the rapid degradation of misfolded endoplasmic reticulum (ER) proteins, a process called ER-associated degradation (ERAD). Targets the misfolded LRR receptor kinase BRI1. Functions redundantly with HRD3B. In Arabidopsis thaliana (Mouse-ear cress), this protein is ERAD-associated E3 ubiquitin-protein ligase HRD1A.